Consider the following 160-residue polypeptide: MAPK regulated corepressor interacting protein 2 (160 aa).

An N-acetylmethionine modification is found at methionine 1. Residues 1–22 (MYTITKGPSKLVAQRRTGPTQQ) form a disordered region. Arginine 35 bears the Omega-N-methylarginine mark. The disordered stretch occupies residues 43–64 (LPAHLQPSAQTQGPWPLASSGP). At serine 61 the chain carries Phosphoserine. Arginine 65 is subject to Omega-N-methylarginine. A Phosphoserine modification is found at serine 82.

This sequence belongs to the MCRIP family. In terms of assembly, interacts with DDX6. Interacts with MCRIP1.

It localises to the cytoplasm. The protein resides in the stress granule. The protein localises to the nucleus. This Mus musculus (Mouse) protein is MAPK regulated corepressor interacting protein 2 (Mcrip2).